Consider the following 231-residue polypeptide: DNA mismatch repair protein MutH (231 aa).

The protein belongs to the MutH family.

The protein resides in the cytoplasm. Functionally, sequence-specific endonuclease that cleaves unmethylated GATC sequences. It is involved in DNA mismatch repair. This is DNA mismatch repair protein MutH from Klebsiella pneumoniae subsp. pneumoniae (strain ATCC 700721 / MGH 78578).